The sequence spans 120 residues: Fluoride-specific ion channel FluC 1 (120 aa).

The next 2 helical transmembrane spans lie at alanine 3–alanine 23 and leucine 42–leucine 62. Residues glycine 69 and threonine 72 each coordinate Na(+). The helical transmembrane segment at alanine 99–leucine 119 threads the bilayer.

It belongs to the fluoride channel Fluc/FEX (TC 1.A.43) family.

The protein localises to the cell membrane. The enzyme catalyses fluoride(in) = fluoride(out). Na(+) is not transported, but it plays an essential structural role and its presence is essential for fluoride channel function. Functionally, fluoride-specific ion channel. Important for reducing fluoride concentration in the cell, thus reducing its toxicity. The sequence is that of Fluoride-specific ion channel FluC 1 from Thermobifida fusca (strain YX).